We begin with the raw amino-acid sequence, 68 residues long: Large ribosomal subunit protein uL29 (68 aa).

The protein belongs to the universal ribosomal protein uL29 family.

The polypeptide is Large ribosomal subunit protein uL29 (Wigglesworthia glossinidia brevipalpis).